The chain runs to 851 residues: DNA mismatch repair protein MutS (851 aa).

Position 602-609 (602-609 (GPNMSGKS)) interacts with ATP.

The protein belongs to the DNA mismatch repair MutS family.

Functionally, this protein is involved in the repair of mismatches in DNA. It is possible that it carries out the mismatch recognition step. This protein has a weak ATPase activity. In Streptococcus pyogenes serotype M4 (strain MGAS10750), this protein is DNA mismatch repair protein MutS.